The sequence spans 406 residues: Tryptophan synthase beta chain (406 aa).

Lys-99 is modified (N6-(pyridoxal phosphate)lysine).

Belongs to the TrpB family. In terms of assembly, tetramer of two alpha and two beta chains. Pyridoxal 5'-phosphate serves as cofactor.

It carries out the reaction (1S,2R)-1-C-(indol-3-yl)glycerol 3-phosphate + L-serine = D-glyceraldehyde 3-phosphate + L-tryptophan + H2O. Its pathway is amino-acid biosynthesis; L-tryptophan biosynthesis; L-tryptophan from chorismate: step 5/5. Its function is as follows. The beta subunit is responsible for the synthesis of L-tryptophan from indole and L-serine. The polypeptide is Tryptophan synthase beta chain (Brucella canis (strain ATCC 23365 / NCTC 10854 / RM-666)).